The chain runs to 326 residues: Tetraacyldisaccharide 4'-kinase (326 aa).

Residue 55–62 coordinates ATP; sequence TAGGNGKT.

This sequence belongs to the LpxK family.

It catalyses the reaction a lipid A disaccharide + ATP = a lipid IVA + ADP + H(+). Its pathway is glycolipid biosynthesis; lipid IV(A) biosynthesis; lipid IV(A) from (3R)-3-hydroxytetradecanoyl-[acyl-carrier-protein] and UDP-N-acetyl-alpha-D-glucosamine: step 6/6. Transfers the gamma-phosphate of ATP to the 4'-position of a tetraacyldisaccharide 1-phosphate intermediate (termed DS-1-P) to form tetraacyldisaccharide 1,4'-bis-phosphate (lipid IVA). This is Tetraacyldisaccharide 4'-kinase from Serratia proteamaculans (strain 568).